A 72-amino-acid chain; its full sequence is Mitotic-spindle organizing protein 1 (72 aa).

The protein belongs to the MOZART1 family. As to quaternary structure, part of the gamma-tubulin complex.

Its subcellular location is the cytoplasm. It localises to the cytoskeleton. The protein localises to the microtubule organizing center. It is found in the centrosome. The protein resides in the spindle. Required for gamma-tubulin complex recruitment to the centrosome. The polypeptide is Mitotic-spindle organizing protein 1 (mzt1) (Xenopus tropicalis (Western clawed frog)).